Reading from the N-terminus, the 413-residue chain is Putative zinc finger protein B0310.2 (413 aa).

2 disordered regions span residues 130-151 (PIFS…KRSL) and 259-290 (VESD…TGPM). Positions 270 to 281 (PSPSTGDITENE) are enriched in polar residues. C2H2-type zinc fingers lie at residues 306-330 (FICM…MFIH) and 336-358 (HTCP…KKTH).

The protein localises to the nucleus. This Caenorhabditis elegans protein is Putative zinc finger protein B0310.2.